We begin with the raw amino-acid sequence, 504 residues long: 26S proteasome non-ATPase regulatory subunit 5 (504 aa).

Alanine 2 carries the N-acetylalanine modification.

It belongs to the proteasome subunit S5B/HSM3 family. As to quaternary structure, interacts with PSMC1, PSMC2, PSMD1 and PSMD6. Part of transient complex containing PSMD5, PSMC2, PSMC1 and PSMD2 formed during the assembly of the 26S proteasome.

Acts as a chaperone during the assembly of the 26S proteasome, specifically of the base subcomplex of the PA700/19S regulatory complex (RC). In the initial step of the base subcomplex assembly is part of an intermediate PSMD5:PSMC2:PSMC1:PSMD2 module which probably assembles with a PSMD10:PSMC4:PSMC5:PAAF1 module followed by dissociation of PSMD5. The sequence is that of 26S proteasome non-ATPase regulatory subunit 5 (PSMD5) from Homo sapiens (Human).